A 545-amino-acid chain; its full sequence is Glucose-6-phosphate isomerase (545 aa).

Glu-351 acts as the Proton donor in catalysis. Catalysis depends on residues His-382 and Lys-510.

Belongs to the GPI family.

Its subcellular location is the cytoplasm. The enzyme catalyses alpha-D-glucose 6-phosphate = beta-D-fructose 6-phosphate. The protein operates within carbohydrate biosynthesis; gluconeogenesis. Its pathway is carbohydrate degradation; glycolysis; D-glyceraldehyde 3-phosphate and glycerone phosphate from D-glucose: step 2/4. Its function is as follows. Catalyzes the reversible isomerization of glucose-6-phosphate to fructose-6-phosphate. In Shewanella sp. (strain ANA-3), this protein is Glucose-6-phosphate isomerase.